The following is a 164-amino-acid chain: Glutamate uptake regulatory protein (164 aa).

The 62-residue stretch at 5–66 (LDDFDIKILD…LLDPQKIGLG (62 aa)) folds into the HTH asnC-type domain. Residues 24 to 43 (MAELSEKTGLSANACWRRIR) constitute a DNA-binding region (H-T-H motif).

Functionally, represses the secondary, H(+)-coupled glutamate uptake system (Gluemp) genes. The polypeptide is Glutamate uptake regulatory protein (grp) (Zymomonas mobilis subsp. mobilis (strain ATCC 31821 / ZM4 / CP4)).